The chain runs to 298 residues: Proline-rich protein 32 (298 aa).

Residues 36 to 56 form a disordered region; that stretch reads CLSSKPEDDAEPWGQPQVPLR.

The sequence is that of Proline-rich protein 32 (PRR32) from Homo sapiens (Human).